We begin with the raw amino-acid sequence, 202 residues long: Superoxide dismutase [Mn/Fe] (202 aa).

Fe(3+) contacts are provided by H26, H80, D163, and H167. Mn(2+) contacts are provided by H26, H80, D163, and H167.

It belongs to the iron/manganese superoxide dismutase family. Homodimer. Mn(2+) serves as cofactor. Requires Fe(3+) as cofactor.

The enzyme catalyses 2 superoxide + 2 H(+) = H2O2 + O2. Functionally, destroys superoxide anion radicals which are normally produced within the cells and which are toxic to biological systems. Catalyzes the dismutation of superoxide anion radicals into O2 and H2O2 by successive reduction and oxidation of the transition metal ion at the active site. The polypeptide is Superoxide dismutase [Mn/Fe] (sodB) (Methylomonas sp. (strain J)).